The following is a 220-amino-acid chain: Ribonuclease HII (220 aa).

Residues 32-220 form the RNase H type-2 domain; that stretch reads KHIAGIDEAG…FAPIKGCFDC (189 aa). A divalent metal cation-binding residues include D38, E39, and D130.

Belongs to the RNase HII family. It depends on Mn(2+) as a cofactor. Requires Mg(2+) as cofactor.

It localises to the cytoplasm. The catalysed reaction is Endonucleolytic cleavage to 5'-phosphomonoester.. Its function is as follows. Endonuclease that specifically degrades the RNA of RNA-DNA hybrids. The protein is Ribonuclease HII of Brucella abortus (strain 2308).